Here is a 347-residue protein sequence, read N- to C-terminus: NADH-ubiquinone oxidoreductase chain 2 (347 aa).

11 helical membrane-spanning segments follow: residues 1 to 21 (MNPL…MIVM), 25 to 45 (HWLT…PILM), 59 to 79 (YFLT…INLL), 96 to 116 (IIMT…FWVP), 122 to 142 (IQLS…MSIL), 145 to 165 (IFPT…VAIG), 178 to 198 (IMAY…AYNP), 201 to 221 (TLLN…MFML), 237 to 257 (APLL…LPPL), 276 to 296 (IITP…YMRL), and 326 to 346 (VSPL…LMLL).

It belongs to the complex I subunit 2 family. In terms of assembly, core subunit of respiratory chain NADH dehydrogenase (Complex I) which is composed of 45 different subunits. Interacts with TMEM242.

Its subcellular location is the mitochondrion inner membrane. It catalyses the reaction a ubiquinone + NADH + 5 H(+)(in) = a ubiquinol + NAD(+) + 4 H(+)(out). Functionally, core subunit of the mitochondrial membrane respiratory chain NADH dehydrogenase (Complex I) which catalyzes electron transfer from NADH through the respiratory chain, using ubiquinone as an electron acceptor. Essential for the catalytic activity and assembly of complex I. The polypeptide is NADH-ubiquinone oxidoreductase chain 2 (Boneia bidens (Manado fruit bat)).